A 106-amino-acid chain; its full sequence is Large ribosomal subunit protein eL42 (106 aa).

Basic residues predominate over residues 1-29; it reads MVNIPKTRRTYCKGKACRKHTPHKVTQYK. The interval 1-56 is disordered; that stretch reads MVNIPKTRRTYCKGKACRKHTPHKVTQYKKGKDSLSAQGKRRYDRKQSGYGGQTKP.

It belongs to the eukaryotic ribosomal protein eL42 family.

This is Large ribosomal subunit protein eL42 (RPL44) from Cryptococcus neoformans var. neoformans serotype D (strain B-3501A) (Filobasidiella neoformans).